A 254-amino-acid chain; its full sequence is Phosphoribosylaminoimidazole-succinocarboxamide synthase (254 aa).

It belongs to the SAICAR synthetase family.

It carries out the reaction 5-amino-1-(5-phospho-D-ribosyl)imidazole-4-carboxylate + L-aspartate + ATP = (2S)-2-[5-amino-1-(5-phospho-beta-D-ribosyl)imidazole-4-carboxamido]succinate + ADP + phosphate + 2 H(+). The protein operates within purine metabolism; IMP biosynthesis via de novo pathway; 5-amino-1-(5-phospho-D-ribosyl)imidazole-4-carboxamide from 5-amino-1-(5-phospho-D-ribosyl)imidazole-4-carboxylate: step 1/2. The sequence is that of Phosphoribosylaminoimidazole-succinocarboxamide synthase from Acidiphilium cryptum (strain JF-5).